The following is a 424-amino-acid chain: Folate-like transporter 3 (424 aa).

Asn35 carries an N-linked (GlcNAc...) asparagine glycan. The next 5 membrane-spanning stretches (helical) occupy residues 55–75 (VALIPSFLLTDVLLYKPILII), 78–98 (LSYFACWMIFVFGRSVWCMQL), 101–119 (LFYGWATATEIAYFAYIYV), 136–156 (ALLVGRFLAYTLAQLLIGLNW), and 164–184 (IINLVSMTFAVFLAAILPHVP). A glycan (N-linked (GlcNAc...) asparagine) is linked at Asn254. 3 helical membrane passes run 313–333 (GLLFWMSQSHEIIILYICYII), 361–381 (LFGINTFVALALQSILTAIVI), and 392–412 (FVVYSGYHIVVATLFGIIFGI).

The protein belongs to the reduced folate carrier (RFC) transporter (TC 2.A.48) family.

Its subcellular location is the membrane. This Caenorhabditis elegans protein is Folate-like transporter 3 (folt-3).